The chain runs to 702 residues: Polyribonucleotide nucleotidyltransferase 2 (702 aa).

Mg(2+) is bound by residues aspartate 483 and aspartate 489. Residues 550 to 609 enclose the KH domain; that stretch reads PQVTKLKVHPDKVREVIGAGGKVINKIIDETGVKINIENDGTIYIAAPDQESARVALEMI. One can recognise an S1 motif domain in the interval 619–687; it reads GEVYTGKVIK…PQGKIGLSRK (69 aa).

The protein belongs to the polyribonucleotide nucleotidyltransferase family. Mg(2+) serves as cofactor.

It localises to the cytoplasm. The enzyme catalyses RNA(n+1) + phosphate = RNA(n) + a ribonucleoside 5'-diphosphate. Its function is as follows. Involved in mRNA degradation. Catalyzes the phosphorolysis of single-stranded polyribonucleotides processively in the 3'- to 5'-direction. The sequence is that of Polyribonucleotide nucleotidyltransferase 2 from Alkaliphilus metalliredigens (strain QYMF).